A 298-amino-acid chain; its full sequence is ATP synthase gamma chain (298 aa).

The protein belongs to the ATPase gamma chain family. F-type ATPases have 2 components, CF(1) - the catalytic core - and CF(0) - the membrane proton channel. CF(1) has five subunits: alpha(3), beta(3), gamma(1), delta(1), epsilon(1). CF(0) has three main subunits: a, b and c.

It is found in the cell inner membrane. Produces ATP from ADP in the presence of a proton gradient across the membrane. The gamma chain is believed to be important in regulating ATPase activity and the flow of protons through the CF(0) complex. The sequence is that of ATP synthase gamma chain from Francisella tularensis subsp. tularensis (strain FSC 198).